Here is a 275-residue protein sequence, read N- to C-terminus: Phosphatidylglycerol--prolipoprotein diacylglyceryl transferase (275 aa).

7 helical membrane passes run 22-42, 61-81, 96-116, 125-145, 177-197, 204-224, and 238-258; these read LSVRWYGLMYLFGFAFAMWLA, LLFYGFLGVILGGRVGYVLFY, IWTGGMSFHGGLIGVITAMIW, FFTVADFVAPLIPFGLGVGRI, SQLYQFALEGVVLFIILNLFW, GAISGLFLFCYGLFRFLVEFV, and ISMGQILSMPMIVAGALMVWA. Arg-144 is a binding site for a 1,2-diacyl-sn-glycero-3-phospho-(1'-sn-glycerol).

This sequence belongs to the Lgt family.

The protein localises to the cell inner membrane. The catalysed reaction is L-cysteinyl-[prolipoprotein] + a 1,2-diacyl-sn-glycero-3-phospho-(1'-sn-glycerol) = an S-1,2-diacyl-sn-glyceryl-L-cysteinyl-[prolipoprotein] + sn-glycerol 1-phosphate + H(+). It functions in the pathway protein modification; lipoprotein biosynthesis (diacylglyceryl transfer). In terms of biological role, catalyzes the transfer of the diacylglyceryl group from phosphatidylglycerol to the sulfhydryl group of the N-terminal cysteine of a prolipoprotein, the first step in the formation of mature lipoproteins. The polypeptide is Phosphatidylglycerol--prolipoprotein diacylglyceryl transferase (Aeromonas salmonicida (strain A449)).